The sequence spans 106 residues: Thioredoxin (106 aa).

Residues 2–106 (VNFLKTKADF…GLREKIKKNK (105 aa)) form the Thioredoxin domain. Residues Cys-32 and Cys-35 each act as nucleophile in the active site. A disulfide bridge links Cys-32 with Cys-35.

It belongs to the thioredoxin family.

The protein localises to the cytoplasm. Functionally, participates in various redox reactions through the reversible oxidation of its active center dithiol to a disulfide and catalyzes dithiol-disulfide exchange reactions. This is Thioredoxin (THIO) from Geodia cydonium (Sponge).